Here is a 27-residue protein sequence, read N- to C-terminus: Defensin-like protein 2 (27 aa).

Pyrrolidone carboxylic acid is present on glutamine 1.

It belongs to the DEFL family. As to quaternary structure, forms oligomers in its native state.

Possesses some antifungal activity sensitive to inorganic cations and antibacterial activity against B.megaterium. This chain is Defensin-like protein 2, found in Brassica campestris (Field mustard).